Reading from the N-terminus, the 1068-residue chain is Protein AF-10 (1068 aa).

The PHD-type 1 zinc-finger motif lies at isoleucine 22 to glutamine 74. Residues arginine 79 to valine 112 form a C2HC pre-PHD-type zinc finger. The segment at valine 80–alanine 287 is self-association. Positions alanine 106–tyrosine 190 are required for interaction with histone H3. The PHD-type 2 zinc finger occupies lysine 135–phenylalanine 198. An interaction with FSTL3 region spans residues aspartate 141 to lysine 233. Residues arginine 206–threonine 260 are disordered. The span at serine 211–histidine 222 shows a compositional bias: low complexity. A Phosphoserine modification is found at serine 217. Positions serine 223 to lysine 240 are enriched in basic and acidic residues. Serine 252 bears the Phosphoserine mark. Lysine 280 is covalently cross-linked (Glycyl lysine isopeptide (Lys-Gly) (interchain with G-Cter in SUMO2)). The segment covering asparagine 291–lysine 305 has biased composition (polar residues). Residues asparagine 291 to alanine 505 are disordered. Over residues aspartate 306–glycine 317 the composition is skewed to basic and acidic residues. A DNA-binding region spans residues arginine 311 to leucine 674. Low complexity predominate over residues serine 352–glutamine 372. 2 stretches are compositionally biased toward polar residues: residues tyrosine 387–threonine 396 and serine 404–proline 446. Serine 436 carries the phosphoserine modification. A compositionally biased stretch (basic residues) spans glutamate 465–glycine 483. The segment covering valine 490 to alanine 505 has biased composition (low complexity). Serine 532 bears the Phosphoserine mark. Residues serine 583 to serine 594 show a composition bias toward low complexity. 2 disordered regions span residues serine 583–proline 612 and asparagine 660–asparagine 708. Polar residues-rich tracts occupy residues histidine 595 to leucine 604 and asparagine 660 to asparagine 673. The span at leucine 674–leucine 694 shows a compositional bias: low complexity. Phosphoserine occurs at positions 684, 686, and 689. Residues asparagine 703–threonine 784 are transactivation domain; required for DOT1L-binding. Residues leucine 750–leucine 778 form a leucine-zipper region. The segment covering alanine 800–serine 814 has biased composition (polar residues). The segment at alanine 800–serine 865 is disordered. Low complexity-rich tracts occupy residues leucine 834–serine 848 and glutamine 855–serine 865.

Self-associates. Interacts with FSTL3 isoform 2; the interaction enhances MLLT10 in vitro transcriptional activity and self-association. Interacts with YEATS4. Interacts with SS18. Interacts with DOT1L; this interaction also occurs with the KMT2A/MLL1 fusion protein. Interacts with histone H3; interaction is necessary for MLLT10 binding to nucleosomes; interaction is inhibited by histone H3 'Lys-27' methylations (H3K27me1, H3K27me2 and H3K27me3) amd acetylation; interaction stabilizes association of MLLT10 at chromatin; interaction is essential for histone H3 'Lys-79' dimethylation (H3K79me2). Expressed abundantly in testis.

The protein resides in the nucleus. Probably involved in transcriptional regulation. In vitro or as fusion protein with KMT2A/MLL1 has transactivation activity. Binds to cruciform DNA. In cells, binding to unmodified histone H3 regulates DOT1L functions including histone H3 'Lys-79' dimethylation (H3K79me2) and gene activation. The chain is Protein AF-10 from Homo sapiens (Human).